The following is a 310-amino-acid chain: Thioesterase pytI (310 aa).

Helical transmembrane passes span 14–34 and 95–115; these read SLTP…YFAL and LLGG…IFVA. Residues 168 to 195 form a disordered region; it reads TLSDDASTTTSSDNSRASTDHGADSEVE. Residues 170–184 show a composition bias toward low complexity; it reads SDDASTTTSSDNSRA.

It belongs to the AMT4 thioesterase family.

It localises to the membrane. The protein operates within secondary metabolite biosynthesis. In terms of biological role, thioesterase; part of the gene cluster that mediates the biosynthesis of pyranterreones, a family of antioxidative compounds. The first step of pyranonigrins biosynthesis is performed by the hybrid PKS-NRPS synthetase pytA that condenses 4 malonyl-CoA units ato the acetyl starter unit by the modular PKS of pytA. The acyl chain is then connected to an L-serine through the amide bond by the modular NRPS of pytA. A tetramic acid is formed and released from the PKS-NRPS pytA to give pyranterreone 5 with the help of the thioesterase pytI. Pyranterreone 5 could be methylated by pytC to afford pyranterreone 6. Both pyranterreones 5 and 6 are subsequently oxidized by the FAD-linked oxidoreductase pytB and the cytochrome P450 monooxygenase pytD to form the fused gamma-pyrone core, resulting in pyranterreones 7 and 11, respectively. The hydroxy group at C-8 of pyranterreones 7 and 11 are dehydrated by the aspartyl protease pytH to form a delta-7 double bond to give pyranterreones 3 and 1, 2 accordingly. The exo-methylene of pyranterreone 3 could be reduced into a pendant methyl by reductase pytE to provide pyranterreone 4, also known as cordylactam. Pyranterreone 4 can be reconverted to pyranterreone 3 through pytB-catalyzed dehydrogenation or further oxidized to pyranterreones 9 and 10. This Aspergillus terreus protein is Thioesterase pytI.